A 280-amino-acid chain; its full sequence is Transcription factor MYB60 (280 aa).

2 HTH myb-type domains span residues 9–65 (KIGI…RPGI) and 66–116 (KRGN…KKKL). 2 consecutive DNA-binding regions (H-T-H motif) follow at residues 37-61 (WRSV…TNYL) and 89-112 (WASI…NTHL). Cys49 and Cys53 each carry S-nitrosocysteine. The segment covering 118 to 127 (KSDSDERSRS) has biased composition (basic and acidic residues). 2 disordered regions span residues 118-149 (KSDS…TYAS) and 204-247 (EEGH…NATP). Over residues 128 to 149 (ENIALQTSSTRNTINHRSTYAS) the composition is skewed to polar residues.

In terms of tissue distribution, specifically expressed in guard cells. Present in seedlings, leaves, stems and flowers.

It is found in the nucleus. Functionally, transcription factor involved in the regulation of gene (e.g. drought-regulated and flavonoid biosynthetic genes) expression and stomatal movements leading to negative regulation of responses to drought and responses to other physiological stimuli (e.g. light). Promotes guard cell deflation in response to water deficit. Triggers root growth upon osmotic stress (e.g. mannitol containing medium). The chain is Transcription factor MYB60 from Arabidopsis thaliana (Mouse-ear cress).